We begin with the raw amino-acid sequence, 381 residues long: Acetyl-CoA:oxalate CoA-transferase (381 aa).

Residue His233 is part of the active site.

Belongs to the CoA-transferase III family. Homodimer.

It carries out the reaction oxalate + acetyl-CoA = oxalyl-CoA + acetate. Its function is as follows. Involved in the catabolism of oxalate and in the adapatation to low pH. ACOCT serves to prime the oxalate-induced acid tolerance response (ATR) cycle by producing substrate for oxalyl-CoA decarboxylase (OXC) and formyl-coenzyme A transferase (FCOCT). Catalyzes the reversible conversion of acetyl-CoA and oxalate to oxalyl-CoA and acetate. It can also use formyl-CoA and oxalate to produce oxalyl-CoA and formate with significantly reduced specific activity. The protein is Acetyl-CoA:oxalate CoA-transferase (yfdE) of Escherichia coli (strain K12).